The sequence spans 104 residues: Large ribosomal subunit protein uL24 (104 aa).

It belongs to the universal ribosomal protein uL24 family. In terms of assembly, part of the 50S ribosomal subunit.

Functionally, one of two assembly initiator proteins, it binds directly to the 5'-end of the 23S rRNA, where it nucleates assembly of the 50S subunit. One of the proteins that surrounds the polypeptide exit tunnel on the outside of the subunit. This Corynebacterium jeikeium (strain K411) protein is Large ribosomal subunit protein uL24.